The sequence spans 92 residues: Small ribosomal subunit protein bS20 (92 aa).

The protein belongs to the bacterial ribosomal protein bS20 family.

Its function is as follows. Binds directly to 16S ribosomal RNA. The chain is Small ribosomal subunit protein bS20 from Rickettsia africae (strain ESF-5).